Consider the following 338-residue polypeptide: Fructose-1,6-bisphosphatase 1 (338 aa).

A2 is subject to N-acetylalanine. AMP is bound by residues 18 to 22 (VMEQG) and 28 to 32 (TGELT). The Mg(2+) site is built by D69 and E98. An AMP-binding site is contributed by 113-114 (KY). 3 residues coordinate Mg(2+): D119, L121, and D122. 122–125 (DGSS) is a binding site for substrate. R141 contacts AMP. K151 is subject to N6-succinyllysine. Substrate-binding positions include 213-216 (NEGY), 244-249 (RYVGSM), Y265, and 275-277 (KLR). Phosphotyrosine is present on residues Y216, Y245, and Y265. A Mg(2+)-binding site is contributed by E281.

Belongs to the FBPase class 1 family. As to quaternary structure, homotetramer. Requires Mg(2+) as cofactor. In terms of tissue distribution, detected in pancreatic beta-cell lines MIN6 and beta-TC and in liver (at protein level). Preferentially expressed in liver, with lower levels detected in pancreatic islets and intestine, and very low levels in blood, muscle, brain and spleen.

The catalysed reaction is beta-D-fructose 1,6-bisphosphate + H2O = beta-D-fructose 6-phosphate + phosphate. The protein operates within carbohydrate biosynthesis; gluconeogenesis. Subject to complex allosteric regulation. The enzyme can assume an active R-state, or an inactive T-state. Intermediate conformations may exist. AMP acts as an allosteric inhibitor. AMP binding affects the turnover of bound substrate and not the affinity for substrate. Fructose 2,6-bisphosphate acts as a competitive inhibitor. Fructose 2,6-bisphosphate and AMP have synergistic effects. Its function is as follows. Catalyzes the hydrolysis of fructose 1,6-bisphosphate to fructose 6-phosphate in the presence of divalent cations, acting as a rate-limiting enzyme in gluconeogenesis. Plays a role in regulating glucose sensing and insulin secretion of pancreatic beta-cells. Appears to modulate glycerol gluconeogenesis in liver. Important regulator of appetite and adiposity; increased expression of the protein in liver after nutrient excess increases circulating satiety hormones and reduces appetite-stimulating neuropeptides and thus seems to provide a feedback mechanism to limit weight gain. The sequence is that of Fructose-1,6-bisphosphatase 1 (Fbp1) from Mus musculus (Mouse).